The chain runs to 633 residues: MGKVIGIDLGTTNSCVAVMDGKTPKVIENAEGMRTTPSIVAFSDDGERLVGQPAKRQAVTNPERTFFAVKRLIGRRYDDPMVEKDKKLVPYKIVKASNGDAWVEADANTYSPSQVSAFILQKMKETAEAHLGAKVDQAVITVPAYFNDAQRQATKDAGKIAGLEVLRIINEPTAAALAYGLDKAKAGVIAVYDLGGGTFDVSILEIGDGVFEVKSTNGDTFLGGEDFDMRLVSYLADEFQKEQGINLRNDKLALQRLKEAAEKAKIELSSTTQTEINLPFITADQTGPKHLTMKLTRAKFEALVDDLVQKTIEPCRKALKDAGLTAGEIGEVVLVGGMTRMPKVQEVVKQLFGKEPHKGVNPDEVVAIGAAIQAGVLQGDVKDVLLLDVTPLSLGIETLGGVFTRIIDRNTTIPTKKSQVFSTAEDNQNAVTIRVFQGEREMAADNKVLGQFDLMGIPPSPRGMPQIEVTFDIDANGIVNVSARDKATGKEQQIRIQASGGLSEADIDKMVKDAEINAAEDKKRREAVDAKNHADALVHSTEKALAEHGAKVEEPERRAIEDALSDLREALKGDDAEAIKTKTNTLAQASMKLGEAMYKQQAEADAAKDAAKDDVVDAEFTEVDDDKNTKKSA.

Threonine 198 is subject to Phosphothreonine; by autocatalysis.

It belongs to the heat shock protein 70 family.

In terms of biological role, acts as a chaperone. The polypeptide is Chaperone protein DnaK (Rhodopseudomonas palustris (strain BisA53)).